A 631-amino-acid polypeptide reads, in one-letter code: Phosphomethylpyrimidine synthase (631 aa).

Residues Asn-239, Met-268, Tyr-297, His-333, 353-355 (SRG), 394-397 (DGLR), and Glu-433 contribute to the substrate site. His-437 lines the Zn(2+) pocket. Tyr-460 contacts substrate. A Zn(2+)-binding site is contributed by His-501. Cys-581, Cys-584, and Cys-589 together coordinate [4Fe-4S] cluster.

The protein belongs to the ThiC family. As to quaternary structure, homodimer. [4Fe-4S] cluster is required as a cofactor.

It carries out the reaction 5-amino-1-(5-phospho-beta-D-ribosyl)imidazole + S-adenosyl-L-methionine = 4-amino-2-methyl-5-(phosphooxymethyl)pyrimidine + CO + 5'-deoxyadenosine + formate + L-methionine + 3 H(+). The protein operates within cofactor biosynthesis; thiamine diphosphate biosynthesis. Its function is as follows. Catalyzes the synthesis of the hydroxymethylpyrimidine phosphate (HMP-P) moiety of thiamine from aminoimidazole ribotide (AIR) in a radical S-adenosyl-L-methionine (SAM)-dependent reaction. In Salmonella paratyphi C (strain RKS4594), this protein is Phosphomethylpyrimidine synthase.